Consider the following 295-residue polypeptide: Mycothiol acetyltransferase (295 aa).

N-acetyltransferase domains are found at residues 5–141 (VEIR…TPLP) and 149–295 (VRLR…MYRR). Position 35 (glutamate 35) interacts with 1D-myo-inositol 2-(L-cysteinylamino)-2-deoxy-alpha-D-glucopyranoside. Acetyl-CoA is bound at residue 76–78 (LVV). Residues glutamate 176, lysine 215, and glutamate 229 each coordinate 1D-myo-inositol 2-(L-cysteinylamino)-2-deoxy-alpha-D-glucopyranoside. Residues 233–235 (VGV) and 240–246 (RGTGLGR) contribute to the acetyl-CoA site. Position 267 (tyrosine 267) interacts with 1D-myo-inositol 2-(L-cysteinylamino)-2-deoxy-alpha-D-glucopyranoside. 272–277 (NTAAVR) lines the acetyl-CoA pocket.

Belongs to the acetyltransferase family. MshD subfamily. Monomer.

The enzyme catalyses 1D-myo-inositol 2-(L-cysteinylamino)-2-deoxy-alpha-D-glucopyranoside + acetyl-CoA = mycothiol + CoA + H(+). Functionally, catalyzes the transfer of acetyl from acetyl-CoA to desacetylmycothiol (Cys-GlcN-Ins) to form mycothiol. The protein is Mycothiol acetyltransferase of Thermobispora bispora (strain ATCC 19993 / DSM 43833 / CBS 139.67 / JCM 10125 / KCTC 9307 / NBRC 14880 / R51).